A 645-amino-acid polypeptide reads, in one-letter code: 1-deoxy-D-xylulose-5-phosphate synthase (645 aa).

Thiamine diphosphate contacts are provided by residues histidine 83 and 124 to 126 (GHS). Aspartate 155 contributes to the Mg(2+) binding site. Residues 156 to 157 (GS), asparagine 184, tyrosine 295, and glutamate 376 each bind thiamine diphosphate. Asparagine 184 is a binding site for Mg(2+).

This sequence belongs to the transketolase family. DXPS subfamily. Homodimer. Requires Mg(2+) as cofactor. Thiamine diphosphate serves as cofactor.

The catalysed reaction is D-glyceraldehyde 3-phosphate + pyruvate + H(+) = 1-deoxy-D-xylulose 5-phosphate + CO2. It functions in the pathway metabolic intermediate biosynthesis; 1-deoxy-D-xylulose 5-phosphate biosynthesis; 1-deoxy-D-xylulose 5-phosphate from D-glyceraldehyde 3-phosphate and pyruvate: step 1/1. In terms of biological role, catalyzes the acyloin condensation reaction between C atoms 2 and 3 of pyruvate and glyceraldehyde 3-phosphate to yield 1-deoxy-D-xylulose-5-phosphate (DXP). The protein is 1-deoxy-D-xylulose-5-phosphate synthase of Desulfotalea psychrophila (strain LSv54 / DSM 12343).